A 435-amino-acid polypeptide reads, in one-letter code: Probable exopolygalacturonase B (435 aa).

The N-terminal stretch at 1-15 (MKFFLATLFASAVSS) is a signal peptide. Residues Asn-59, Asn-184, and Asn-224 are each glycosylated (N-linked (GlcNAc...) asparagine). PbH1 repeat units follow at residues 208-239 (SKDV…DSLN), 240-261 (VDGL…SPKP), 262-283 (NTTN…SMGS), 294-315 (IEHA…RLKA), and 326-347 (INNI…VLDQ). Asp-254 functions as the Proton donor in the catalytic mechanism. Cysteines 256 and 273 form a disulfide. 2 N-linked (GlcNAc...) asparagine glycosylation sites follow: Asn-262 and Asn-274. His-277 is a catalytic residue. N-linked (GlcNAc...) asparagine glycosylation is found at Asn-301, Asn-328, Asn-365, and Asn-373. One copy of the PbH1 6 repeat lies at 366–388 (VTNILFENISGTSSGKNGKVVAD). The cysteines at positions 391 and 397 are disulfide-linked. An N-linked (GlcNAc...) asparagine glycan is attached at Asn-406.

It belongs to the glycosyl hydrolase 28 family.

The protein resides in the secreted. It carries out the reaction [(1-&gt;4)-alpha-D-galacturonosyl](n) + H2O = alpha-D-galacturonate + [(1-&gt;4)-alpha-D-galacturonosyl](n-1). In terms of biological role, specific in hydrolyzing the terminal glycosidic bond of polygalacturonic acid and oligogalacturonates. This Aspergillus oryzae (strain ATCC 42149 / RIB 40) (Yellow koji mold) protein is Probable exopolygalacturonase B (pgxB).